We begin with the raw amino-acid sequence, 262 residues long: Tryptophan synthase alpha chain (262 aa).

Catalysis depends on proton acceptor residues E47 and D58.

It belongs to the TrpA family. As to quaternary structure, tetramer of two alpha and two beta chains.

The enzyme catalyses (1S,2R)-1-C-(indol-3-yl)glycerol 3-phosphate + L-serine = D-glyceraldehyde 3-phosphate + L-tryptophan + H2O. It participates in amino-acid biosynthesis; L-tryptophan biosynthesis; L-tryptophan from chorismate: step 5/5. Its function is as follows. The alpha subunit is responsible for the aldol cleavage of indoleglycerol phosphate to indole and glyceraldehyde 3-phosphate. In Chromobacterium violaceum (strain ATCC 12472 / DSM 30191 / JCM 1249 / CCUG 213 / NBRC 12614 / NCIMB 9131 / NCTC 9757 / MK), this protein is Tryptophan synthase alpha chain.